The chain runs to 826 residues: Dolichyl-diphosphooligosaccharide--protein glycosyltransferase subunit STT3B (826 aa).

The segment at 1 to 60 is disordered; it reads MAEPSAPESKHKSSLNSSPWSGLMALGNSRHGHHGPGAQCAHKAAGGAAPPKPAPAGLSG. The residue at position 2 (Ala-2) is an N-acetylalanine. Over 2–41 the chain is Cytoplasmic; sequence AEPSAPESKHKSSLNSSPWSGLMALGNSRHGHHGPGAQCA. Residues Ser-13, Ser-18, and Ser-29 each carry the phosphoserine modification. A compositionally biased stretch (low complexity) spans 37 to 49; sequence GAQCAHKAAGGAA. Residues 42–86 form a helical membrane-spanning segment; the sequence is HKAAGGAAPPKPAPAGLSGGLSQPAGWQSLLSFTILFLAWLAGFS. Over 87–173 the chain is Lumenal; the sequence is SRLFAVIRFE…VHIRDVCVFL (87 aa). Positions 101–103 match the DXD motif 1 motif; it reads EFD. A Mn(2+)-binding site is contributed by Asp-103. Residues 174-192 traverse the membrane as a helical segment; that stretch reads APTFSGLTSISTFLLTREL. At 193–194 the chain is on the cytoplasmic side; that stretch reads WN. The helical transmembrane segment at 195–212 threads the bilayer; it reads QGAGLLAACFIAIVPGYI. Topologically, residues 213-223 are lumenal; it reads SRSVAGSFDNE. The Mn(2+) site is built by Asp-221 and Glu-223. The short motif at 221 to 223 is the DXD motif 2 element; sequence DNE. A helical transmembrane segment spans residues 224 to 243; that stretch reads GIAIFALQFTYYLWVKSVKT. Residues 244 to 245 are Cytoplasmic-facing; it reads GS. The chain crosses the membrane as a helical span at residues 246–260; sequence VFWTMCCCLSYFYMV. Over 261–265 the chain is Lumenal; sequence SAWGG. Residues 266 to 282 traverse the membrane as a helical segment; the sequence is YVFIINLIPLHVFVLLL. Over 283–287 the chain is Cytoplasmic; the sequence is MQRYS. The helical transmembrane segment at 288 to 313 threads the bilayer; it reads KRVYIAYSTFYIVGLILSMQIPFVGF. Residues 314–321 are Lumenal-facing; it reads QPIRTSEH. Residues 322–341 form a helical membrane-spanning segment; it reads MAAAGVFALLQAYAFLQYLR. Residues 342–350 are Cytoplasmic-facing; that stretch reads DRLTKQEFQ. Residues 351–371 form a helical membrane-spanning segment; the sequence is TLFFLGVSLAAGAVFLSVIYL. Residues 372–410 lie on the Lumenal side of the membrane; it reads TYTGYIAPWSGRFYSLWDTGYAKIHIPIIASVSEHQPTT. An SVSE motif motif is present at residues 402-405; sequence SVSE. Residues 411–433 form a helical membrane-spanning segment; that stretch reads WVSFFFDLHILVCTFPAGLWFCI. At 434-439 the chain is on the cytoplasmic side; the sequence is KNINDE. A helical membrane pass occupies residues 440–456; it reads RVFVALYAISAVYFAGV. At 457-460 the chain is on the lumenal side; that stretch reads MVRL. Arg-459 contacts dolichyl diphosphooligosaccharide. A helical transmembrane segment spans residues 461–482; that stretch reads MLTLTPVVCMLSAIAFSNVFEH. Over 483–526 the chain is Cytoplasmic; that stretch reads YLGDDMKRENPPVEDSSDEDDKRNQGNLYDKAGKVRKHATEQEK. Residues 490–509 are disordered; it reads RENPPVEDSSDEDDKRNQGN. A phosphoserine mark is found at Ser-498 and Ser-499. A helical membrane pass occupies residues 527 to 552; sequence TEEGLGPNIKSIVTMLMLMLLMMFAV. The Lumenal portion of the chain corresponds to 553–826; the sequence is HCTWVTSNAY…KGKKISKKTV (274 aa). The interacts with target acceptor peptide in protein substrate stretch occupies residues 604–606; sequence WWD. The WWDYG motif signature appears at 604–608; it reads WWDYG. Tyr-609 is a binding site for dolichyl diphosphooligosaccharide. N-linked (GlcNAc...) asparagine glycans are attached at residues Asn-616 and Asn-623. The N-linked (GlcNAc...) (high mannose) asparagine glycan is linked to Asn-627. The N-linked (GlcNAc...) asparagine glycan is linked to Asn-641. The DK motif signature appears at 671–678; sequence DINKFLWM.

The protein belongs to the STT3 family. In terms of assembly, component of the oligosaccharyltransferase (OST) complex. There are 2 OST complexes, OST-A and OST-B, which contain STT3A or STT3B as catalytic subunit, respectively. OST-A and OST-B contain common core subunits RPN1, RPN2, OST48, OST4, DAD1 and TMEM258, and OST-B contains either MAGT1 or TUSC3 as specific accessory subunit. Mg(2+) is required as a cofactor. Mn(2+) serves as cofactor. In terms of tissue distribution, expressed in heart, brain, placenta, lung, liver, muscle, kidney and pancreas. Expressed in skin fibroblasts (at protein level).

The protein resides in the endoplasmic reticulum. It is found in the endoplasmic reticulum membrane. The catalysed reaction is a di-trans,poly-cis-dolichyl diphosphooligosaccharide + L-asparaginyl-[protein] = N(4)-(oligosaccharide-(1-&gt;4)-N-acetyl-beta-D-glucosaminyl-(1-&gt;4)-N-acetyl-beta-D-glucosaminyl)-L-asparaginyl-[protein] + a di-trans,poly-cis-dolichyl diphosphate + H(+). The protein operates within protein modification; protein glycosylation. Its function is as follows. Catalytic subunit of the oligosaccharyl transferase (OST) complex that catalyzes the initial transfer of a defined glycan (Glc(3)Man(9)GlcNAc(2) in eukaryotes) from the lipid carrier dolichol-pyrophosphate to an asparagine residue within an Asn-X-Ser/Thr consensus motif in nascent polypeptide chains, the first step in protein N-glycosylation. N-glycosylation occurs cotranslationally and the complex associates with the Sec61 complex at the channel-forming translocon complex that mediates protein translocation across the endoplasmic reticulum (ER). All subunits are required for a maximal enzyme activity. This subunit contains the active site and the acceptor peptide and donor lipid-linked oligosaccharide (LLO) binding pockets. STT3B is present in a small subset of OST complexes (OST-B) and mediates both cotranslational and post-translational N-glycosylation of target proteins: STT3B-containing complexes are required for efficient post-translational glycosylation and while they are less competent than STT3A-containing complexes for cotranslational glycosylation, they have the ability to mediate glycosylation of some nascent sites that are not accessible for STT3A. STT3B-containing complexes also act post-translationally and mediate modification of skipped glycosylation sites in unfolded proteins. Plays a role in ER-associated degradation (ERAD) pathway that mediates ubiquitin-dependent degradation of misfolded endoplasmic reticulum proteins by mediating N-glycosylation of unfolded proteins, which are then recognized by the ERAD pathway and targeted for degradation. Mediates glycosylation of the disease variant AMYL-TTR 'Asp-38' of TTR at 'Asn-118', leading to its degradation. This is Dolichyl-diphosphooligosaccharide--protein glycosyltransferase subunit STT3B from Homo sapiens (Human).